We begin with the raw amino-acid sequence, 37 residues long: Photosystem II reaction center protein T (37 aa).

The chain crosses the membrane as a helical span at residues 3-23 (ALVYTFLLVSTLGIIFFAIFF).

This sequence belongs to the PsbT family. In terms of assembly, PSII is composed of 1 copy each of membrane proteins PsbA, PsbB, PsbC, PsbD, PsbE, PsbF, PsbH, PsbI, PsbJ, PsbK, PsbL, PsbM, PsbT, PsbY, PsbZ, Psb30/Ycf12, at least 3 peripheral proteins of the oxygen-evolving complex and a large number of cofactors. It forms dimeric complexes.

The protein resides in the plastid. It is found in the chloroplast thylakoid membrane. Found at the monomer-monomer interface of the photosystem II (PS II) dimer, plays a role in assembly and dimerization of PSII. PSII is a light-driven water plastoquinone oxidoreductase, using light energy to abstract electrons from H(2)O, generating a proton gradient subsequently used for ATP formation. This Cucumis sativus (Cucumber) protein is Photosystem II reaction center protein T.